The primary structure comprises 285 residues: Putative cysteine-rich repeat secretory protein 14 (285 aa).

The first 30 residues, 1–30, serve as a signal peptide directing secretion; it reads MSSFCLSKHLILVPILVMMAQLLLIRNVLS. Gnk2-homologous domains lie at 37–143 and 161–273; these read YLYH…SIST and RPNA…RYPF.

Belongs to the cysteine-rich repeat secretory protein family.

It is found in the secreted. This chain is Putative cysteine-rich repeat secretory protein 14 (CRRSP14), found in Arabidopsis thaliana (Mouse-ear cress).